A 288-amino-acid polypeptide reads, in one-letter code: 4-hydroxybenzoate octaprenyltransferase (288 aa).

The next 8 membrane-spanning stretches (helical) occupy residues 23–43 (IGSLLLLWPTLWALWLAGRGI), 46–66 (AKILVVFVLGVFFMRAAGCVV), 98–118 (ILFVVLILLSFGLVLTLNSMT), 141–161 (LPQVVLGAAFGWSIPMGFAAV), 163–183 (ESLPLVCWLLLLANICWTVAY), 213–233 (LIIGLLQLATLLLMVAIGWLM), 234–254 (NLGGAFYWSILLAGALFTHQQ), and 268–288 (AFLNNNYVGLVLFLGILISYW).

It belongs to the UbiA prenyltransferase family. Mg(2+) serves as cofactor.

It localises to the cell inner membrane. It catalyses the reaction all-trans-octaprenyl diphosphate + 4-hydroxybenzoate = 4-hydroxy-3-(all-trans-octaprenyl)benzoate + diphosphate. It participates in cofactor biosynthesis; ubiquinone biosynthesis. Functionally, catalyzes the prenylation of para-hydroxybenzoate (PHB) with an all-trans polyprenyl group. Mediates the second step in the final reaction sequence of ubiquinone-8 (UQ-8) biosynthesis, which is the condensation of the polyisoprenoid side chain with PHB, generating the first membrane-bound Q intermediate 3-octaprenyl-4-hydroxybenzoate. The chain is 4-hydroxybenzoate octaprenyltransferase from Yersinia pseudotuberculosis serotype IB (strain PB1/+).